Reading from the N-terminus, the 571-residue chain is Sulfite reductase [NADPH] hemoprotein beta-component (571 aa).

Residues cysteine 435, cysteine 441, cysteine 480, and cysteine 484 each contribute to the [4Fe-4S] cluster site. Cysteine 484 contributes to the siroheme binding site.

This sequence belongs to the nitrite and sulfite reductase 4Fe-4S domain family. In terms of assembly, alpha(8)-beta(8). The alpha component is a flavoprotein, the beta component is a hemoprotein. Siroheme serves as cofactor. The cofactor is [4Fe-4S] cluster.

It catalyses the reaction hydrogen sulfide + 3 NADP(+) + 3 H2O = sulfite + 3 NADPH + 4 H(+). It functions in the pathway sulfur metabolism; hydrogen sulfide biosynthesis; hydrogen sulfide from sulfite (NADPH route): step 1/1. In terms of biological role, component of the sulfite reductase complex that catalyzes the 6-electron reduction of sulfite to sulfide. This is one of several activities required for the biosynthesis of L-cysteine from sulfate. The sequence is that of Sulfite reductase [NADPH] hemoprotein beta-component from Dickeya chrysanthemi (strain Ech1591) (Dickeya zeae (strain Ech1591)).